A 36-amino-acid polypeptide reads, in one-letter code: APSEPHHPGDQATQDQLAQYYSDLYQYITFVTRPRF.

Phenylalanine amide is present on Phe36.

The protein belongs to the NPY family.

The protein localises to the secreted. In terms of biological role, hormone secreted by pancreatic cells that acts as a regulator of pancreatic and gastrointestinal functions. The polypeptide is Pancreatic polypeptide (ppy) (Rana temporaria (European common frog)).